Consider the following 600-residue polypeptide: Glutamine--fructose-6-phosphate aminotransferase [isomerizing] (600 aa).

Catalysis depends on Cys2, which acts as the Nucleophile; for GATase activity. Positions 2-217 (CGIVGFIGEQ…DKEIVIVTKE (216 aa)) constitute a Glutamine amidotransferase type-2 domain. SIS domains follow at residues 283-422 (IRNA…AKGE) and 452-590 (LAKQ…VDKP). Residue Lys595 is the For Fru-6P isomerization activity of the active site.

In terms of assembly, homodimer.

The protein resides in the cytoplasm. It catalyses the reaction D-fructose 6-phosphate + L-glutamine = D-glucosamine 6-phosphate + L-glutamate. Its function is as follows. Catalyzes the first step in hexosamine metabolism, converting fructose-6P into glucosamine-6P using glutamine as a nitrogen source. This chain is Glutamine--fructose-6-phosphate aminotransferase [isomerizing], found in Bacillus cereus (strain ATCC 10987 / NRS 248).